The following is a 400-amino-acid chain: Exodeoxyribonuclease 7 large subunit (400 aa).

Belongs to the XseA family. Heterooligomer composed of large and small subunits.

The protein localises to the cytoplasm. The enzyme catalyses Exonucleolytic cleavage in either 5'- to 3'- or 3'- to 5'-direction to yield nucleoside 5'-phosphates.. Its function is as follows. Bidirectionally degrades single-stranded DNA into large acid-insoluble oligonucleotides, which are then degraded further into small acid-soluble oligonucleotides. This Clostridium perfringens (strain ATCC 13124 / DSM 756 / JCM 1290 / NCIMB 6125 / NCTC 8237 / Type A) protein is Exodeoxyribonuclease 7 large subunit.